The following is a 155-amino-acid chain: Ribonuclease H (155 aa).

The region spanning 1–142 is the RNase H type-1 domain; that stretch reads MLKQVEIFTD…CDVLARDAAS (142 aa). Mg(2+) contacts are provided by D10, E48, D70, and D134.

Belongs to the RNase H family. As to quaternary structure, monomer. Mg(2+) serves as cofactor.

It localises to the cytoplasm. It carries out the reaction Endonucleolytic cleavage to 5'-phosphomonoester.. Functionally, endonuclease that specifically degrades the RNA of RNA-DNA hybrids. This chain is Ribonuclease H, found in Serratia proteamaculans (strain 568).